Reading from the N-terminus, the 274-residue chain is Large ribosomal subunit protein uL2cz/uL2cy (274 aa).

Disordered regions lie at residues 1-22 (MAIN…DSQV) and 224-274 (NPVD…RRSK).

Belongs to the universal ribosomal protein uL2 family. Part of the 50S ribosomal subunit.

The protein resides in the plastid. The protein localises to the chloroplast. In Helianthus annuus (Common sunflower), this protein is Large ribosomal subunit protein uL2cz/uL2cy (rpl2-A).